The following is a 304-amino-acid chain: GS homeobox 2 (304 aa).

Residues 116-151 (AQFCPRVNHAHHHHHPPQHHHHHHQPQQPGSAAAAA) are disordered. Over residues 123–140 (NHAHHHHHPPQHHHHHHQ) the composition is skewed to basic residues. Over residues 141–151 (PQQPGSAAAAA) the composition is skewed to low complexity. Residues 202-261 (GKRMRTAFTSTQLLELEREFSSNMYLSRLRRIEIATYLNLSEKQVKIWFQNRRVKHKKEG) constitute a DNA-binding region (homeobox). Residues 283–304 (RSEDEDSLSPASANDDKEISPL) are disordered.

The protein belongs to the Antp homeobox family.

Its subcellular location is the nucleus. The protein localises to the cytoplasm. In terms of biological role, transcription factor that binds 5'-CNAATTAG-3' DNA sequence and regulates the expression of numerous genes including genes important for brain development. During telencephalic development, causes ventralization of pallial progenitors and, depending on the developmental stage, specifies different neuronal fates. At early stages, necessary and sufficient to correctly specify the ventral lateral ganglionic eminence (LGE) and its major derivatives, the striatal projection neurons. At later stages, may specify LGE progenitors toward dorsal LGE fates, including olfactory bulb interneurons. The polypeptide is GS homeobox 2 (GSX2) (Homo sapiens (Human)).